The sequence spans 338 residues: Nucleoid-associated protein PA14_59050 (338 aa).

Belongs to the YejK family.

The protein localises to the cytoplasm. It is found in the nucleoid. In Pseudomonas aeruginosa (strain UCBPP-PA14), this protein is Nucleoid-associated protein PA14_59050.